The chain runs to 167 residues: Alanine- and arginine-rich domain-containing protein (167 aa).

The segment at Leu-140–Ala-167 is disordered.

In terms of tissue distribution, preferentially expressed in testis both in embryo and adult. Expressed at much lower level in other tissues.

The chain is Alanine- and arginine-rich domain-containing protein (Aard) from Mus musculus (Mouse).